Consider the following 394-residue polypeptide: Phosphopentomutase (394 aa).

Asp14, Asp287, His292, Asp328, His329, and His340 together coordinate Mn(2+).

Belongs to the phosphopentomutase family. The cofactor is Mn(2+).

It localises to the cytoplasm. It carries out the reaction 2-deoxy-alpha-D-ribose 1-phosphate = 2-deoxy-D-ribose 5-phosphate. It catalyses the reaction alpha-D-ribose 1-phosphate = D-ribose 5-phosphate. The protein operates within carbohydrate degradation; 2-deoxy-D-ribose 1-phosphate degradation; D-glyceraldehyde 3-phosphate and acetaldehyde from 2-deoxy-alpha-D-ribose 1-phosphate: step 1/2. Its function is as follows. Isomerase that catalyzes the conversion of deoxy-ribose 1-phosphate (dRib-1-P) and ribose 1-phosphate (Rib-1-P) to deoxy-ribose 5-phosphate (dRib-5-P) and ribose 5-phosphate (Rib-5-P), respectively. The polypeptide is Phosphopentomutase (Listeria monocytogenes serotype 4b (strain CLIP80459)).